We begin with the raw amino-acid sequence, 435 residues long: MTEMVPHARSAEIMARARMRFPGGVNSPVRAFRGVGGEPFVAARGKGARIWDVDGNEYFDYVLSWGPLVLGHAPDVVLHAVSQAMLEGTSFGMPTAREVELADAIAGRMPHLEMVRFTSSGTEATMSIARLARAVTKREHILKFDGCYHGHGDSFLVRAGSGVATLGLPDSPGVPEALAKLTLTCAFNDLDAVERIARDVPLAAIMLEPIVGNSGFIEPTPGFIQGLRRIADETGALLVFDEVMTGFRIAFGGATEYFGVTPDLTALGKVIGGGLPVAAYGGSRTLMEHIAPTGPVYQAGTLSGNPLAMAAGIATLGALTRSVHDEITNQTAALVDGLRGIATRRGVPLSARHVGSMWGFFFRDGDVHSFDDAKQSDVALFRRFFHAARTRGVSLAPSAFEAAFMSAAHGPAEVGETLSRLDDALGAALTDTAGH.

Lysine 269 is subject to N6-(pyridoxal phosphate)lysine.

It belongs to the class-III pyridoxal-phosphate-dependent aminotransferase family. HemL subfamily. Homodimer. Requires pyridoxal 5'-phosphate as cofactor.

It localises to the cytoplasm. It catalyses the reaction (S)-4-amino-5-oxopentanoate = 5-aminolevulinate. It participates in porphyrin-containing compound metabolism; protoporphyrin-IX biosynthesis; 5-aminolevulinate from L-glutamyl-tRNA(Glu): step 2/2. The sequence is that of Glutamate-1-semialdehyde 2,1-aminomutase from Gemmatimonas aurantiaca (strain DSM 14586 / JCM 11422 / NBRC 100505 / T-27).